Consider the following 387-residue polypeptide: Oxidase FUB9 (387 aa).

The tract at residues 1-20 is disordered; it reads MSRTNLPIQPAKMSDATSSK. The region spanning 18–379 is the FMN hydroxy acid dehydrogenase domain; that stretch reads SSKPQIFSIQ…TPAHLSILNA (362 aa). Tyr-44 is a binding site for a 2-oxocarboxylate. The FMN site is built by Ser-126, Gln-150, and Thr-178. Arg-187 lines the a 2-oxocarboxylate pocket. An FMN-binding site is contributed by Lys-250. His-274 acts as the Proton acceptor in catalysis. Arg-277 provides a ligand contact to a 2-oxocarboxylate. Residues 305–309 and 328–329 each bind FMN; these read DGGFR and GR.

The protein belongs to the FMN-dependent alpha-hydroxy acid dehydrogenase family. FMN is required as a cofactor.

Its pathway is mycotoxin biosynthesis. Functionally, oxidase; part of the gene cluster that mediates the biosynthesis of fusaric acid, a mycotoxin with low to moderate toxicity to animals and humans, but with high phytotoxic properties. L-aspartate is suggested as fusaric acid amino acid precursor that is activated and further processed to O-acetyl-L-homoserine by cluster enzymes aspartate kinase FUB3 and homoserine O-acetyltransferase FUB5, as well as enzymes of the primary metabolism. The polyketide synthase (PKS) FUB1 generates the triketide trans-2-hexenal which is presumptively released by the hydrolase FUB4 and linked to the NRPS-bound amino acid precursor by NAD(P)-dependent dehydrogenase FUB6. FUB1, FUB4, and the non-canonical NRPS Fub8 may form an enzyme complex. Further processing of the NRPS-bound intermediate might be carried out by FUB6 and the sulfhydrylase FUB7, enabling a spontaneous electrocyclization to close the carbon backbone of fusaric acid. Dihydrofusaric acid is likely to be released via reduction by the thioester reductase (TR) domain of FUB8 whereupon the final oxidation to fusaric acid may (also) be performed by the FMN-dependent dehydrogenase FUB9. This is Oxidase FUB9 from Fusarium oxysporum f. sp. lycopersici (strain 4287 / CBS 123668 / FGSC 9935 / NRRL 34936) (Fusarium vascular wilt of tomato).